Here is a 25-residue protein sequence, read N- to C-terminus: Antithrombin-III (25 aa).

The protein belongs to the serpin family. In terms of assembly, forms protease inhibiting heterodimer with TMPRSS7. In terms of processing, phosphorylated by FAM20C in the extracellular medium. As to expression, plasma.

The protein localises to the secreted. It is found in the extracellular space. In terms of biological role, most important serine protease inhibitor in plasma that regulates the blood coagulation cascade. AT-III inhibits thrombin, matriptase-3/TMPRSS7, as well as factors IXa, Xa and XIa. Its inhibitory activity is greatly enhanced in the presence of heparin. This is Antithrombin-III (SERPINC1) from Mesocricetus auratus (Golden hamster).